The chain runs to 103 residues: Large ribosomal subunit protein eL42 (103 aa).

The tract at residues G37–F56 is disordered.

Belongs to the eukaryotic ribosomal protein eL42 family.

This Dictyostelium discoideum (Social amoeba) protein is Large ribosomal subunit protein eL42 (rpl36a).